The sequence spans 357 residues: DNA integrity scanning protein DisA (357 aa).

The region spanning 9–147 is the DAC domain; sequence DRKLLEILKT…DDIKYILRDS (139 aa). ATP is bound by residues G76, L94, and 107–111; that span reads TRHRT.

Belongs to the DisA family. As to quaternary structure, homooctamer. Mg(2+) serves as cofactor.

The enzyme catalyses 2 ATP = 3',3'-c-di-AMP + 2 diphosphate. Its function is as follows. Participates in a DNA-damage check-point that is active prior to asymmetric division when DNA is damaged. DisA forms globular foci that rapidly scan along the chromosomes during sporulation, searching for lesions. When a lesion is present, DisA pauses at the lesion site. This triggers a cellular response that culminates in a temporary block in sporulation initiation. Functionally, also has diadenylate cyclase activity, catalyzing the condensation of 2 ATP molecules into cyclic di-AMP (c-di-AMP). c-di-AMP acts as a signaling molecule that couples DNA integrity with progression of sporulation. The rise in c-di-AMP level generated by DisA while scanning the chromosome, operates as a positive signal that advances sporulation; upon encountering a lesion, the DisA focus arrests at the damaged site and halts c-di-AMP synthesis. The sequence is that of DNA integrity scanning protein DisA from Clostridium acetobutylicum (strain ATCC 824 / DSM 792 / JCM 1419 / IAM 19013 / LMG 5710 / NBRC 13948 / NRRL B-527 / VKM B-1787 / 2291 / W).